We begin with the raw amino-acid sequence, 315 residues long: Protoheme IX farnesyltransferase (315 aa).

9 helical membrane-spanning segments follow: residues 32–52 (VMSLVVFTGLVGLVLAPGHMN), 53–73 (PVLAVISILCIAVGAGASGAL), 93–113 (IPAGIIAPNQVLAFGLTLSAF), 120–140 (LMVNWLAAALLAFTIFFYAVI), 153–173 (IVIGGAAGAFPPMIGWAAATG), 180–200 (LVLFMIIFLWTPPHFWALSLF), 226–246 (ALFYAVLMAPVGVLPWVMGFA), 249–269 (FYGVVSTLLGLAFVYYAWRLW), and 295–315 (IFAVLLFEALTFKLLAAFGVF).

It belongs to the UbiA prenyltransferase family. Protoheme IX farnesyltransferase subfamily.

The protein resides in the cell inner membrane. It carries out the reaction heme b + (2E,6E)-farnesyl diphosphate + H2O = Fe(II)-heme o + diphosphate. Its pathway is porphyrin-containing compound metabolism; heme O biosynthesis; heme O from protoheme: step 1/1. Functionally, converts heme B (protoheme IX) to heme O by substitution of the vinyl group on carbon 2 of heme B porphyrin ring with a hydroxyethyl farnesyl side group. In Brucella suis (strain ATCC 23445 / NCTC 10510), this protein is Protoheme IX farnesyltransferase.